The primary structure comprises 191 residues: MSIKSDRWIRHMAQQHGMIAPFEPGQIKQNATGQRIVSYGTSSYGYDVRCSREFKIFTNINSTIVDPKQFDNGSFIDVESDVCIIPPNSFALARTIEYFRIPRNVLVICLGKSTYARCGIIVNVTPLEPEWEGHVTLEFSNTTPLPARIYANEGVAQMLFLQADPDDVCQTSYRDRNGKYQGQTGVTLPRT.

DCTP is bound by residues 112 to 117 (KSTYAR), 136 to 138 (TLE), Gln157, Tyr173, and Gln183. Catalysis depends on Glu138, which acts as the Proton donor/acceptor.

The protein belongs to the dCTP deaminase family. Homotrimer.

The enzyme catalyses dCTP + H2O + H(+) = dUTP + NH4(+). Its pathway is pyrimidine metabolism; dUMP biosynthesis; dUMP from dCTP (dUTP route): step 1/2. Its function is as follows. Catalyzes the deamination of dCTP to dUTP. The chain is dCTP deaminase from Xylella fastidiosa (strain 9a5c).